Reading from the N-terminus, the 135-residue chain is MPPKSRTAGGARKTRRKEKKNVSHGHAYIKSTFNNTIVSITDPSGAVIAWASSGQVGFKGSRKSTPFAAQLAAEAAARRAQEHGMKKVDVFVKGPGSGRETAIRSLQATGLEVGSISDVTPQAHNGVRPPKRRRV.

A disordered region spans residues 1–26 (MPPKSRTAGGARKTRRKEKKNVSHGH). Residues 12–23 (RKTRRKEKKNVS) show a composition bias toward basic residues.

It belongs to the universal ribosomal protein uS11 family. In terms of assembly, part of the 30S ribosomal subunit. Interacts with proteins S7 and S18. Binds to IF-3.

Located on the platform of the 30S subunit, it bridges several disparate RNA helices of the 16S rRNA. Forms part of the Shine-Dalgarno cleft in the 70S ribosome. This Beutenbergia cavernae (strain ATCC BAA-8 / DSM 12333 / CCUG 43141 / JCM 11478 / NBRC 16432 / NCIMB 13614 / HKI 0122) protein is Small ribosomal subunit protein uS11.